The sequence spans 332 residues: Phosphate acyltransferase (332 aa).

This sequence belongs to the PlsX family. In terms of assembly, homodimer. Probably interacts with PlsY.

The protein resides in the cytoplasm. The enzyme catalyses a fatty acyl-[ACP] + phosphate = an acyl phosphate + holo-[ACP]. The protein operates within lipid metabolism; phospholipid metabolism. Its function is as follows. Catalyzes the reversible formation of acyl-phosphate (acyl-PO(4)) from acyl-[acyl-carrier-protein] (acyl-ACP). This enzyme utilizes acyl-ACP as fatty acyl donor, but not acyl-CoA. The sequence is that of Phosphate acyltransferase from Thermoanaerobacter pseudethanolicus (strain ATCC 33223 / 39E) (Clostridium thermohydrosulfuricum).